The sequence spans 150 residues: Transcriptional repressor NrdR (150 aa).

A zinc finger lies at 3–34 (CPFCAFADSKVVDSRPDKGGSTIRRRRECESC). Residues 49–139 (PLVIKKDGRR…VYRSFKDITE (91 aa)) form the ATP-cone domain.

It belongs to the NrdR family. Zn(2+) is required as a cofactor.

Functionally, negatively regulates transcription of bacterial ribonucleotide reductase nrd genes and operons by binding to NrdR-boxes. This chain is Transcriptional repressor NrdR, found in Geotalea uraniireducens (strain Rf4) (Geobacter uraniireducens).